The sequence spans 280 residues: 2,3,4,5-tetrahydropyridine-2,6-dicarboxylate N-succinyltransferase (280 aa).

Arginine 107 and aspartate 144 together coordinate substrate.

This sequence belongs to the transferase hexapeptide repeat family. As to quaternary structure, homotrimer.

The protein resides in the cytoplasm. It catalyses the reaction (S)-2,3,4,5-tetrahydrodipicolinate + succinyl-CoA + H2O = (S)-2-succinylamino-6-oxoheptanedioate + CoA. Its pathway is amino-acid biosynthesis; L-lysine biosynthesis via DAP pathway; LL-2,6-diaminopimelate from (S)-tetrahydrodipicolinate (succinylase route): step 1/3. This Paramagnetospirillum magneticum (strain ATCC 700264 / AMB-1) (Magnetospirillum magneticum) protein is 2,3,4,5-tetrahydropyridine-2,6-dicarboxylate N-succinyltransferase.